The chain runs to 641 residues: Isomalto-dextranase (641 aa).

The tat-type signal signal peptide spans 1 to 39 (MMNLSRRTLLTTGSAATLAYALGMAGSAQAATAVTARPG). Aspartate 227 acts as the Nucleophile in catalysis. Catalysis depends on aspartate 288, which acts as the Proton donor. Positions 500 to 640 (TRYPAAFAAW…AINLNWIELD (141 aa)) constitute a CBM6 domain. The interval 556-588 (SGYRYANATDDNTTSKTTTKKANPEKADRSTVD) is disordered. The segment covering 561–576 (ANATDDNTTSKTTTKK) has biased composition (low complexity). Over residues 577-586 (ANPEKADRST) the composition is skewed to basic and acidic residues.

It belongs to the glycosyl hydrolase 27 family. In terms of processing, predicted to be exported by the Tat system. The position of the signal peptide cleavage has been experimentally proven.

It localises to the secreted. It carries out the reaction Hydrolysis of (1-&gt;6)-alpha-D-glucosidic linkages in polysaccharides, to remove successive isomaltose units from the non-reducing ends of the chains.. In Arthrobacter globiformis, this protein is Isomalto-dextranase (imd).